A 207-amino-acid polypeptide reads, in one-letter code: Ribosomal RNA small subunit methyltransferase G (207 aa).

Residues Gly73, Leu78, 124 to 125, and Arg139 each bind S-adenosyl-L-methionine; that span reads VE.

This sequence belongs to the methyltransferase superfamily. RNA methyltransferase RsmG family.

It localises to the cytoplasm. It catalyses the reaction guanosine(527) in 16S rRNA + S-adenosyl-L-methionine = N(7)-methylguanosine(527) in 16S rRNA + S-adenosyl-L-homocysteine. Specifically methylates the N7 position of guanine in position 527 of 16S rRNA. The chain is Ribosomal RNA small subunit methyltransferase G from Shigella flexneri.